Consider the following 451-residue polypeptide: Vacuolar cation/proton exchanger 1a (451 aa).

Residues 1–58 are Cytoplasmic-facing; the sequence is MEAAAAMEAGRKLAARHPHGRSRTAHNMSSSSLRKKSDAALVRKVPVAPLRPLLANLQ. A disordered region spans residues 9-37; sequence AGRKLAARHPHGRSRTAHNMSSSSLRKKS. Positions 13-24 are enriched in basic residues; that stretch reads LAARHPHGRSRT. A helical membrane pass occupies residues 59 to 79; the sequence is EVFLATKLAVLFPAVPLAIAA. The Vacuolar segment spans residues 80–86; sequence QCFRFDQ. A helical membrane pass occupies residues 87 to 107; sequence VWVFALSLLGLIPLAERVSFL. The Cytoplasmic portion of the chain corresponds to 108–120; it reads TEQIALYTGPTVG. A helical membrane pass occupies residues 121-141; it reads GLLNATCGNATELIIALFALL. Residues 128 to 163 form a cation selection region; sequence GNATELIIALFALLKGKIEVVKCSLLGSVLSNLLLV. Residues 142–153 lie on the Vacuolar side of the membrane; it reads KGKIEVVKCSLL. The helical transmembrane segment at 154-174 threads the bilayer; that stretch reads GSVLSNLLLVLGTSLFCGGVV. Topologically, residues 175–191 are cytoplasmic; that stretch reads NLGARQPYDRNQSDVST. A helical transmembrane segment spans residues 192-212; that stretch reads ALLFLAVLCHSAPLLLRYAVA. Topologically, residues 213 to 228 are vacuolar; that stretch reads AGEHSVSATSAAASLD. The chain crosses the membrane as a helical span at residues 229 to 249; the sequence is LSRACSFVMLASYVAYLFFQL. Residues 250 to 273 lie on the Cytoplasmic side of the membrane; sequence KTHRQLFEPQEVDGGDAGDDDEEP. A helical membrane pass occupies residues 274-294; the sequence is ALGFASALFWLALMTAVISVL. At 295–317 the chain is on the vacuolar side; sequence SEYVVGTIEPTSQSWGLSVSFIS. The chain crosses the membrane as a helical span at residues 318 to 338; that stretch reads IILLPIVGNAAEHAGAIIFAL. Residues 325–360 are cation selection; the sequence is GNAAEHAGAIIFALKNKLDITLGVALGSATQISMFV. Topologically, residues 339–352 are cytoplasmic; it reads KNKLDITLGVALGS. A helical membrane pass occupies residues 353-373; it reads ATQISMFVVPLSVLVAWIMGV. Residues 374–378 lie on the Vacuolar side of the membrane; it reads QMDLD. A helical membrane pass occupies residues 379–399; the sequence is FKLLETGSLFMAVLVTAFTLQ. The Cytoplasmic segment spans residues 400-404; the sequence is DGTSH. A helical transmembrane segment spans residues 405-425; the sequence is YLKGILLLLCYIVIGACFFVA. Residues 426–451 are Vacuolar-facing; that stretch reads RQPAGHANSNGALLDVPTGSMSVQAA.

This sequence belongs to the Ca(2+):cation antiporter (CaCA) (TC 2.A.19) family. Cation/proton exchanger (CAX) subfamily. In terms of tissue distribution, ubiquitous.

It is found in the vacuole membrane. In terms of biological role, vacuolar cation/proton exchanger (CAX). Translocates Ca(2+) and other metal ions into vacuoles using the proton gradient formed by H(+)-ATPase and H(+)-pyrophosphatase. The chain is Vacuolar cation/proton exchanger 1a (CAX1a) from Oryza sativa subsp. japonica (Rice).